A 99-amino-acid polypeptide reads, in one-letter code: Probable non-specific lipid-transfer protein AKCS9 (99 aa).

The N-terminal stretch at 1-33 (MTMKMKMKMSVVCAVVVVALFLIDVGPVAEAVT) is a signal peptide. 4 cysteine pairs are disulfide-bonded: Cys-34/Cys-68, Cys-42/Cys-56, Cys-57/Cys-92, and Cys-66/Cys-99.

It belongs to the plant LTP family. In terms of tissue distribution, expressed in most tissues except nodules.

Its function is as follows. Potential lipid transfer protein. This chain is Probable non-specific lipid-transfer protein AKCS9, found in Vigna unguiculata (Cowpea).